The sequence spans 258 residues: Mediator of RNA polymerase II transcription subunit 4 (258 aa).

Residues 52 to 101 adopt a coiled-coil conformation; it reads FRKMLELAEEQAKVEEAMDQLRAKVEVHDREIQKLQKSLKDAELILSTAI. Disordered regions lie at residues 164–208 and 234–258; these read GKSE…EVPN and LETR…SDSQ. Residues 166 to 190 are compositionally biased toward polar residues; sequence SEQNINGGTVTHQNSGMPSEQQRTL. Over residues 194–204 the composition is skewed to gly residues; it reads AGSGSGSGAGG. Residues 246–258 show a composition bias toward low complexity; it reads STDSSSSSSSDSQ.

This sequence belongs to the Mediator complex subunit 4 family. As to quaternary structure, component of the Mediator complex, which includes at least MED4, MED6, MED14, MED17, MED18, MED20, MED21, MED23, MED24, MED27, MED30 and MED31. Interacts with MED10 and MED21.

The protein localises to the nucleus. In terms of biological role, component of the Mediator complex, a coactivator involved in the regulated transcription of nearly all RNA polymerase II-dependent genes. Mediator functions as a bridge to convey information from gene-specific regulatory proteins to the basal RNA polymerase II transcription machinery. Mediator is recruited to promoters by direct interactions with regulatory proteins and serves as a scaffold for the assembly of a functional preinitiation complex with RNA polymerase II and the general transcription factors. Required for activated transcription of the MtnA, MtnB and MtnD genes. The sequence is that of Mediator of RNA polymerase II transcription subunit 4 (MED4) from Drosophila melanogaster (Fruit fly).